Here is a 498-residue protein sequence, read N- to C-terminus: Type VI secretion system sheath protein TssC1 (498 aa).

As to quaternary structure, forms a heterodimer with TssB1. Heterodimers assemble to form the sheath of the T6SS machinery. Interacts with TssA1.

Functionally, core component of the H1 type VI (H1-T6SS) secretion system that plays a role in the release of toxins targeting both eukaryotic and prokaryotic species. Forms the sheath of the structure by assembling into tubules together with TssB1 resulting in the stacking of cogwheel-like structures showing predominantly a 12-fold symmetry. The sheath contracts to provide the energy needed for effector delivery. The protein is Type VI secretion system sheath protein TssC1 of Pseudomonas aeruginosa (strain ATCC 15692 / DSM 22644 / CIP 104116 / JCM 14847 / LMG 12228 / 1C / PRS 101 / PAO1).